A 148-amino-acid chain; its full sequence is uncharacterized protein (148 aa).

An N-terminal signal peptide occupies residues 1–16; sequence MDVLFIALLVAPLILG. Asn-50 carries an N-linked (GlcNAc...) asparagine glycan. The tract at residues 91–125 is disordered; it reads MDPQNPVTTKPVTTEPVTTEPVTTEPQSPNQNDAM. A compositionally biased stretch (low complexity) spans 96 to 116; it reads PVTTKPVTTEPVTTEPVTTEP.

The protein localises to the secreted. This is an uncharacterized protein from Mus musculus (Mouse).